We begin with the raw amino-acid sequence, 502 residues long: 2-isopropylmalate synthase (502 aa).

Mn(2+)-binding residues include aspartate 1, histidine 189, histidine 191, and asparagine 225. A Pyruvate carboxyltransferase domain is found at 1 to 254; the sequence is DGEQALQASL…STNINYKEIY (254 aa). The segment at 379-502 is regulatory domain; that stretch reads CLKFFSVQSI…VNKKLQELKK (124 aa).

The protein belongs to the alpha-IPM synthase/homocitrate synthase family. LeuA type 1 subfamily. In terms of assembly, homodimer. Mn(2+) is required as a cofactor.

It is found in the cytoplasm. The enzyme catalyses 3-methyl-2-oxobutanoate + acetyl-CoA + H2O = (2S)-2-isopropylmalate + CoA + H(+). It participates in amino-acid biosynthesis; L-leucine biosynthesis; L-leucine from 3-methyl-2-oxobutanoate: step 1/4. Functionally, catalyzes the condensation of the acetyl group of acetyl-CoA with 3-methyl-2-oxobutanoate (2-ketoisovalerate) to form 3-carboxy-3-hydroxy-4-methylpentanoate (2-isopropylmalate). The protein is 2-isopropylmalate synthase of Buchnera aphidicola subsp. Macrosiphoniella ludovicianae.